The following is a 102-amino-acid chain: Large ribosomal subunit protein bL21 (102 aa).

This sequence belongs to the bacterial ribosomal protein bL21 family. As to quaternary structure, part of the 50S ribosomal subunit. Contacts protein L20.

In terms of biological role, this protein binds to 23S rRNA in the presence of protein L20. The polypeptide is Large ribosomal subunit protein bL21 (Limosilactobacillus fermentum (strain NBRC 3956 / LMG 18251) (Lactobacillus fermentum)).